Consider the following 150-residue polypeptide: Large ribosomal subunit protein bL9 (150 aa).

It belongs to the bacterial ribosomal protein bL9 family.

Binds to the 23S rRNA. This chain is Large ribosomal subunit protein bL9, found in Streptococcus pyogenes serotype M2 (strain MGAS10270).